A 728-amino-acid polypeptide reads, in one-letter code: Polyribonucleotide nucleotidyltransferase (728 aa).

Mg(2+) contacts are provided by aspartate 489 and aspartate 495. In terms of domain architecture, KH spans 556–615 (PKIDTIKIDVDKIKIVIGKGGETIDKIIAETGVKIDIDEEGNVSIYSSDQDAINRAKEII). One can recognise an S1 motif domain in the interval 625–693 (DEVYHAKVVR…AKGRVDASMK (69 aa)). Residues 691-728 (SMKALLPRPPKPEKSDKHHDKGHPHKKHEEAPLTQTEE) form a disordered region. The segment covering 700–709 (PKPEKSDKHH) has biased composition (basic and acidic residues).

This sequence belongs to the polyribonucleotide nucleotidyltransferase family. Mg(2+) is required as a cofactor.

It is found in the cytoplasm. It catalyses the reaction RNA(n+1) + phosphate = RNA(n) + a ribonucleoside 5'-diphosphate. Functionally, involved in mRNA degradation. Catalyzes the phosphorolysis of single-stranded polyribonucleotides processively in the 3'- to 5'-direction. This Streptococcus gordonii (strain Challis / ATCC 35105 / BCRC 15272 / CH1 / DL1 / V288) protein is Polyribonucleotide nucleotidyltransferase.